Consider the following 221-residue polypeptide: Chaperone protein TorD (221 aa).

It belongs to the TorD/DmsD family. TorD subfamily.

It is found in the cytoplasm. Involved in the biogenesis of TorA. Acts on TorA before the insertion of the molybdenum cofactor and, as a result, probably favors a conformation of the apoenzyme that is competent for acquiring the cofactor. In Shewanella pealeana (strain ATCC 700345 / ANG-SQ1), this protein is Chaperone protein TorD.